We begin with the raw amino-acid sequence, 332 residues long: Torsin-1A (332 aa).

The signal sequence occupies residues 1-20 (MKLGRAALGLLLLAPSVVQA). The interval 91–251 (KPKKPLTLSL…VSVFNNKNSG (161 aa)) is interaction with SNAPIN. 102–109 (GWTGTGKN) lines the ATP pocket. Residues Asn143 and Asn158 are each glycosylated (N-linked (GlcNAc...) asparagine). The segment at 251–332 (GFWHSSLIDR…FTKLDYYYDD (82 aa)) is interaction with KLC1. The segment at 312–332 (RVFSDKGCKTVFTKLDYYYDD) is interaction with SYNE3.

Belongs to the ClpA/ClpB family. Torsin subfamily. Homohexamer. Interacts with TOR1B; the interaction may be specific of neural tissues. Interacts (ATP-bound) with TOR1AIP1 and TOR1AIP2; the interactions induce ATPase activity. Interacts with KLHL14; preferentially when ATP-free. Interacts with KLC1 (via TPR repeats); the interaction associates TOR1A with the kinesin oligomeric complex. Interacts with COPS4; the interaction associates TOR1A with the CSN complex. Interacts with SNAPIN; the interaction is direct and associates SNAPIN with the CSN complex. Interacts with STON2. Interacts (ATP-bound) with SYNE3 (via KASH domain); the interaction is required for SYNE3 nuclear envelope localization. Interacts with VIM; the interaction associates TOR1A with the cytoskeleton. Interacts with PLEC. Interacts (ATP-bound) with SLC6A3; regulates SLC6A3 transport to the plasma membrane. N-glycosylated.

It localises to the endoplasmic reticulum lumen. The protein localises to the nucleus membrane. Its subcellular location is the cell projection. It is found in the growth cone. The protein resides in the cytoplasmic vesicle membrane. It localises to the cytoplasmic vesicle. The protein localises to the secretory vesicle. Its subcellular location is the synaptic vesicle. It is found in the cytoplasm. The protein resides in the cytoskeleton. The enzyme catalyses ATP + H2O = ADP + phosphate + H(+). Its function is as follows. Protein with chaperone functions important for the control of protein folding, processing, stability and localization as well as for the reduction of misfolded protein aggregates. Involved in the regulation of synaptic vesicle recycling, controls STON2 protein stability in collaboration with the COP9 signalosome complex (CSN). In the nucleus, may link the cytoskeleton with the nuclear envelope, this mechanism seems to be crucial for the control of nuclear polarity, cell movement and, specifically in neurons, nuclear envelope integrity. Participates in the cellular trafficking and may regulate the subcellular location of multipass membrane proteins such as the dopamine transporter SLC6A3, leading to the modulation of dopamine neurotransmission. In the endoplasmic reticulum, plays a role in the quality control of protein folding by increasing clearance of misfolded proteins such as SGCE variants or holding them in an intermediate state for proper refolding. May have a redundant function with TOR1B in non-neural tissues. This chain is Torsin-1A (TOR1A), found in Macaca fascicularis (Crab-eating macaque).